Reading from the N-terminus, the 150-residue chain is Transcriptional repressor NrdR (150 aa).

A zinc finger spans residues 3 to 34 (CPFCNFSDSKVVDSRPDKGGAAIRRRRECESC). Residues 49 to 139 (PLVTKRDGRR…VYRSFKDINE (91 aa)) enclose the ATP-cone domain.

This sequence belongs to the NrdR family. Requires Zn(2+) as cofactor.

Its function is as follows. Negatively regulates transcription of bacterial ribonucleotide reductase nrd genes and operons by binding to NrdR-boxes. This chain is Transcriptional repressor NrdR, found in Citrifermentans bemidjiense (strain ATCC BAA-1014 / DSM 16622 / JCM 12645 / Bem) (Geobacter bemidjiensis).